A 330-amino-acid polypeptide reads, in one-letter code: GTPase Obg (330 aa).

Positions 1-159 (MNFIDEVKIY…MWIHLSLKLL (159 aa)) constitute an Obg domain. Residues 160-327 (SDVGLVGLPN…IVKLALKIIK (168 aa)) form the OBG-type G domain. GTP is bound by residues 166–173 (GLPNAGKS), 191–195 (FTTLV), 212–215 (DIPG), 279–282 (NKCD), and 308–310 (STY). Mg(2+)-binding residues include S173 and T193.

It belongs to the TRAFAC class OBG-HflX-like GTPase superfamily. OBG GTPase family. As to quaternary structure, monomer. Requires Mg(2+) as cofactor.

It localises to the cytoplasm. In terms of biological role, an essential GTPase which binds GTP, GDP and possibly (p)ppGpp with moderate affinity, with high nucleotide exchange rates and a fairly low GTP hydrolysis rate. Plays a role in control of the cell cycle, stress response, ribosome biogenesis and in those bacteria that undergo differentiation, in morphogenesis control. The polypeptide is GTPase Obg (Rickettsia akari (strain Hartford)).